The sequence spans 250 residues: 2,3-bisphosphoglycerate-dependent phosphoglycerate mutase (250 aa).

Substrate-binding positions include 8–15 (RHGESEWN), 21–22 (TG), Arg60, 87–90 (ERHY), Lys98, 114–115 (RR), and 183–184 (GN). Catalysis depends on His9, which acts as the Tele-phosphohistidine intermediate. The active-site Proton donor/acceptor is the Glu87.

The protein belongs to the phosphoglycerate mutase family. BPG-dependent PGAM subfamily.

The catalysed reaction is (2R)-2-phosphoglycerate = (2R)-3-phosphoglycerate. It participates in carbohydrate degradation; glycolysis; pyruvate from D-glyceraldehyde 3-phosphate: step 3/5. Its function is as follows. Catalyzes the interconversion of 2-phosphoglycerate and 3-phosphoglycerate. The protein is 2,3-bisphosphoglycerate-dependent phosphoglycerate mutase of Borrelia duttonii (strain Ly).